A 380-amino-acid polypeptide reads, in one-letter code: Chaperone protein DnaJ (380 aa).

A J domain is found at 5–72 (DYYDTLGVPK…QKRAAYDQYG (68 aa)). Residues 21–47 (IKKAYRKLAMKHHPDRNQGDTSKVSED) form a disordered region. Residues 24–34 (AYRKLAMKHHP) are compositionally biased toward basic residues. Residues 35–47 (DRNQGDTSKVSED) are compositionally biased toward basic and acidic residues. A CR-type zinc finger spans residues 139–217 (GKEAQIRIPS…CHGVGKTKNN (79 aa)). Residues cysteine 152, cysteine 155, cysteine 169, cysteine 172, cysteine 191, cysteine 194, cysteine 205, and cysteine 208 each contribute to the Zn(2+) site. CXXCXGXG motif repeat units follow at residues 152 to 159 (CGICHGTG), 169 to 176 (CTTCHGHG), 191 to 198 (CPQCKGSG), and 205 to 212 (CVACHGVG).

It belongs to the DnaJ family. As to quaternary structure, homodimer. Zn(2+) serves as cofactor.

Its subcellular location is the cytoplasm. Participates actively in the response to hyperosmotic and heat shock by preventing the aggregation of stress-denatured proteins and by disaggregating proteins, also in an autonomous, DnaK-independent fashion. Unfolded proteins bind initially to DnaJ; upon interaction with the DnaJ-bound protein, DnaK hydrolyzes its bound ATP, resulting in the formation of a stable complex. GrpE releases ADP from DnaK; ATP binding to DnaK triggers the release of the substrate protein, thus completing the reaction cycle. Several rounds of ATP-dependent interactions between DnaJ, DnaK and GrpE are required for fully efficient folding. Also involved, together with DnaK and GrpE, in the DNA replication of plasmids through activation of initiation proteins. The chain is Chaperone protein DnaJ from Polaromonas naphthalenivorans (strain CJ2).